Consider the following 111-residue polypeptide: Inner membrane protein YdgC (111 aa).

Topologically, residues 1 to 26 (MGLVIKAALGALVVLLIGVLAKTKNY) are cytoplasmic. Residues 27–47 (YIAGLIPLFPTFALIAHYIVA) form a helical membrane-spanning segment. The Periplasmic segment spans residues 48 to 58 (SERGIEALRAT). The chain crosses the membrane as a helical span at residues 59–79 (IIFSMWSIIPYFVYLVSLWYF). The Cytoplasmic segment spans residues 80-87 (TGMMRLPA). The chain crosses the membrane as a helical span at residues 88–108 (AFVGSVACWGISAWVLIICWI). The Periplasmic segment spans residues 109 to 111 (KLH).

This sequence to P.aeruginosa GlpM.

Its subcellular location is the cell inner membrane. The sequence is that of Inner membrane protein YdgC (ydgC) from Escherichia coli O157:H7.